A 225-amino-acid polypeptide reads, in one-letter code: Tryptophan synthase beta chain (225 aa).

This sequence belongs to the TrpB family. Tetramer of two alpha and two beta chains. Pyridoxal 5'-phosphate is required as a cofactor.

The enzyme catalyses (1S,2R)-1-C-(indol-3-yl)glycerol 3-phosphate + L-serine = D-glyceraldehyde 3-phosphate + L-tryptophan + H2O. It functions in the pathway amino-acid biosynthesis; L-tryptophan biosynthesis; L-tryptophan from chorismate: step 5/5. Its function is as follows. The beta subunit is responsible for the synthesis of L-tryptophan from indole and L-serine. This chain is Tryptophan synthase beta chain (trpB), found in Buchnera aphidicola subsp. Rhopalosiphum maidis.